The sequence spans 219 residues: NAD(P)H-quinone oxidoreductase subunit I (219 aa).

2 consecutive 4Fe-4S ferredoxin-type domains span residues 55–84 (GRIHYEFDKCIACEVCVRVCPINLPVVDWV) and 95–124 (RNYSIDFGVCIFCGNCVEYCPTNCLSMTEE). [4Fe-4S] cluster-binding residues include cysteine 64, cysteine 67, cysteine 70, cysteine 74, cysteine 104, cysteine 107, cysteine 110, and cysteine 114.

This sequence belongs to the complex I 23 kDa subunit family. As to quaternary structure, NDH-1 is composed of at least 11 different subunits. [4Fe-4S] cluster serves as cofactor.

The protein resides in the cellular thylakoid membrane. It catalyses the reaction a plastoquinone + NADH + (n+1) H(+)(in) = a plastoquinol + NAD(+) + n H(+)(out). The catalysed reaction is a plastoquinone + NADPH + (n+1) H(+)(in) = a plastoquinol + NADP(+) + n H(+)(out). Its function is as follows. NDH-1 shuttles electrons from an unknown electron donor, via FMN and iron-sulfur (Fe-S) centers, to quinones in the respiratory and/or the photosynthetic chain. The immediate electron acceptor for the enzyme in this species is believed to be plastoquinone. Couples the redox reaction to proton translocation, and thus conserves the redox energy in a proton gradient. The polypeptide is NAD(P)H-quinone oxidoreductase subunit I (Prochlorococcus marinus (strain SARG / CCMP1375 / SS120)).